Here is a 755-residue protein sequence, read N- to C-terminus: Xaa-Pro dipeptidyl-peptidase (755 aa).

Residues serine 348, aspartate 468, and histidine 498 each act as charge relay system in the active site.

It belongs to the peptidase S15 family. In terms of assembly, homodimer.

The protein localises to the cytoplasm. It carries out the reaction Hydrolyzes Xaa-Pro-|- bonds to release unblocked, N-terminal dipeptides from substrates including Ala-Pro-|-p-nitroanilide and (sequentially) Tyr-Pro-|-Phe-Pro-|-Gly-Pro-|-Ile.. In terms of biological role, removes N-terminal dipeptides sequentially from polypeptides having unsubstituted N-termini provided that the penultimate residue is proline. The sequence is that of Xaa-Pro dipeptidyl-peptidase from Streptococcus thermophilus.